Reading from the N-terminus, the 530-residue chain is Methionine--tRNA ligase (530 aa).

The 'HIGH' region signature appears at 18–28 (YYVNDVPHIGS). Zn(2+)-binding residues include C133, C136, C151, and H154. The short motif at 307 to 311 (KMGKS) is the 'KMSKS' region element. Position 310 (K310) interacts with ATP.

Belongs to the class-I aminoacyl-tRNA synthetase family. MetG type 2A subfamily. As to quaternary structure, monomer. Zn(2+) is required as a cofactor.

It localises to the cytoplasm. The enzyme catalyses tRNA(Met) + L-methionine + ATP = L-methionyl-tRNA(Met) + AMP + diphosphate. Functionally, is required not only for elongation of protein synthesis but also for the initiation of all mRNA translation through initiator tRNA(fMet) aminoacylation. This Nostoc sp. (strain PCC 7120 / SAG 25.82 / UTEX 2576) protein is Methionine--tRNA ligase.